Here is a 572-residue protein sequence, read N- to C-terminus: MSRLEIALSSTPEHLLKHLLLGTVLLTSLYALYRRLLPKPLPGIPFNQKSAQSIWGDVLELRDDPSGLAKWCSKQLENHGSPICQALMGPLSKPVVLVADVGNAREMLMGRSDFDRSAYIIDRFPLFGEFHLNMKTGDNWRQSRNWLKDLLAPQYLHNVAGPAIHSSVLKLIELWQHKFHVGDGRVFSMVSDLKTLALDVIVAFHFGSDFQDSALDRQIDHVGKLDGSKLPSGEYNEVEFSKAPLHEFQQGLTDVGDKMAAIYTTKWPPLLVAWWVRYVSPYYRPFFEAKDRFIRKHINLAVRRCRSDEDPSTGIDYMVHREEKAARKARREPVFDKQIMVDEAYGNLIAGQHTTSAALVWILKLLADYPSVQEKLREELQGIFDSAMQENRLPTAAEIIKSKLPYLDAVLEETLRLRAAMLVPRDAAKDTELLGHRIPKGTVVLLVCQGPDYKPSPPSKYWSDVKASRMYPGKGNPDLEIFDPERWLVRNEKGDLEFDGSSYPQLAFGLGIRSCWGRRLAMVEMRIMTTLMILKFELKDVPKGLRGHEASYDISYRAKKGFLHLKSRGEFP.

C515 lines the heme pocket.

It belongs to the cytochrome P450 family. It depends on heme as a cofactor.

Its pathway is secondary metabolite biosynthesis. Functionally, cytochrome P450 monooxygenase; part of the gene cluster that mediates the biosynthesis of the 6-methyl-2-pyrone derivative xylariolide D. XilC hydroxylates the 5-alkyl-6-methyl-2-pyrone backbone called prexylariolide D, produced by the highly reducing polyketide synthase xilA, on its side chain to form xylariolide D. The protein is Cytochrome P450 monooxygenase xilC of Penicillium rubens (strain ATCC 28089 / DSM 1075 / NRRL 1951 / Wisconsin 54-1255) (Penicillium chrysogenum).